The following is a 293-amino-acid chain: Ribosomal protein L11 methyltransferase (293 aa).

Positions 146, 167, 189, and 230 each coordinate S-adenosyl-L-methionine.

Belongs to the methyltransferase superfamily. PrmA family.

The protein resides in the cytoplasm. The enzyme catalyses L-lysyl-[protein] + 3 S-adenosyl-L-methionine = N(6),N(6),N(6)-trimethyl-L-lysyl-[protein] + 3 S-adenosyl-L-homocysteine + 3 H(+). Methylates ribosomal protein L11. The protein is Ribosomal protein L11 methyltransferase of Colwellia psychrerythraea (strain 34H / ATCC BAA-681) (Vibrio psychroerythus).